We begin with the raw amino-acid sequence, 331 residues long: Nucleotide sugar transporter SLC35B4 (331 aa).

11 consecutive transmembrane segments (helical) span residues 4 to 24 (AFAVGLVFAGCCSNVIFLELL), 30 to 50 (GCGNIVTFAQFLFIAVEGFLF), 59 to 79 (PAIPIRYYAIMVTMFFTVSVV), 92 to 112 (LHMIFRSGSLIANMILGIIIL), 124 to 144 (IALVSAGIFICTFMSAKQVTV), 153 to 173 (GFQAFAWWLLGIAALTFALLM), 201 to 221 (ALPLPGFIFLASDIYDHVVLF), 229 to 249 (VPVIGVTMPVMWFYLLMNVVT), 251 to 267 (YVCIRGVFILTTECTSL), 268 to 288 (TVTLVVTLRKFVSLIFSILYF), and 294 to 314 (MWHWLGTSFVFIGTLMYTEVW). The Mediates endoplasmic reticulum retention signature appears at 326–331 (KDDKKD).

The protein belongs to the nucleotide-sugar transporter family. SLC35B subfamily.

It is found in the endoplasmic reticulum membrane. It carries out the reaction UDP-N-acetyl-alpha-D-glucosamine(in) + UDP-alpha-D-glucuronate(out) = UDP-N-acetyl-alpha-D-glucosamine(out) + UDP-alpha-D-glucuronate(in). It catalyses the reaction UDP-alpha-D-xylose(in) + UDP-alpha-D-glucuronate(out) = UDP-alpha-D-xylose(out) + UDP-alpha-D-glucuronate(in). Its function is as follows. Antiporter that transports nucleotide sugars across the endoplasmic reticulum (ER) membrane in exchange for another nucleotide sugar. May couple UDP-alpha-D-glucuronate (UDP-GlcA) or UDP-alpha-D-xylose (UDP-Xyl) efflux to UDP-alpha-D-glucuronate (UDP-GlcA) influx into the ER lumen, which in turn stimulates glucuronidation and excretion of endobiotics and xenobiotics. In Mus musculus (Mouse), this protein is Nucleotide sugar transporter SLC35B4 (Slc35b4).